The chain runs to 342 residues: Protein BMEI1586 (342 aa).

Ser-90 serves as the catalytic Proton acceptor. Substrate contacts are provided by residues 91–92 (GS), Asp-251, and 256–257 (GT).

This sequence belongs to the proline racemase family. Homotetramer.

It catalyses the reaction trans-4-hydroxy-L-proline = cis-4-hydroxy-D-proline. In vitro, catalyzes the epimerization of trans-4-hydroxy-L-proline (t4LHyp) to cis-4-hydroxy-D-proline (c4DHyp) and that of trans-3-hydroxy-L-proline (t3LHyp) to cis-3-hydroxy-D-proline (c3DHyp), albeit with very low efficiency. The physiological substrate may be different. Displays neither proline racemase activity nor t3LHyp dehydratase activity. In Brucella melitensis biotype 1 (strain ATCC 23456 / CCUG 17765 / NCTC 10094 / 16M), this protein is Protein BMEI1586.